Reading from the N-terminus, the 1812-residue chain is Protein virilizer homolog (1812 aa).

Residue alanine 2 is modified to N-acetylalanine. Disordered stretches follow at residues 132-302 and 576-596; these read ISHD…EQIS and KTSS…GLER. Phosphoserine occurs at positions 133 and 138. Residues 139–152 are compositionally biased toward pro residues; it reads PPPPPPPPPPPQPQ. Basic and acidic residues predominate over residues 160-169; it reads KHADGEKEDQ. Position 173 is a phosphoserine (serine 173). Pro residues predominate over residues 174 to 190; it reads PPRPQPRGPRTPPGPPP. A Phosphothreonine modification is found at threonine 184. Position 222 is a phosphoserine (serine 222). The span at 224–233 shows a compositional bias: polar residues; the sequence is DRNSVPQEGQ. Composition is skewed to acidic residues over residues 234-266 and 274-302; these read YSDE…EDED and IPEE…EQIS. The segment covering 584–596 has biased composition (basic and acidic residues); it reads SEPDHDTDAGLER. Residue tyrosine 914 is modified to Phosphotyrosine. Serine 1579 carries the post-translational modification Phosphoserine. 2 disordered regions span residues 1616 to 1635 and 1663 to 1812; these read HVVP…GIRP and KEVV…SFTR. The span at 1689 to 1698 shows a compositional bias: gly residues; sequence GFSGNRGGRG. Threonine 1708 bears the Phosphothreonine mark. Arginine 1723 carries the omega-N-methylarginine modification. Residues 1723–1748 show a composition bias toward polar residues; sequence RGSSWSAQNTPRGNYNESRGGQSNFN. Asymmetric dimethylarginine; alternate is present on arginine 1741. Position 1741 is an omega-N-methylarginine; alternate (arginine 1741). Residues arginine 1773, arginine 1775, and arginine 1793 each carry the asymmetric dimethylarginine modification. Positions 1788–1802 are enriched in gly residues; sequence GSGGSRGKFVSGGSG. A compositionally biased stretch (basic residues) spans 1803–1812; it reads RGRHVRSFTR.

This sequence belongs to the vir family. In terms of assembly, component of the WMM complex, a N6-methyltransferase complex composed of a catalytic subcomplex, named MAC, and of an associated subcomplex, named MACOM. The MAC subcomplex is composed of METTL3 and METTL14. The MACOM subcomplex is composed of WTAP, ZC3H13, CBLL1/HAKAI, VIRMA, and, in some cases of RBM15 (RBM15 or RBM15B). Interacts with WTAP. Also a component of a MACOM-like complex, named WTAP complex, composed of WTAP, ZC3H13, CBLL1, VIRMA, RBM15, BCLAF1 and THRAP3. Interacts with NUDT21 and CPSF6.

Its subcellular location is the nucleus speckle. The protein localises to the nucleus. It is found in the nucleoplasm. It localises to the cytoplasm. In terms of biological role, associated component of the WMM complex, a complex that mediates N6-methyladenosine (m6A) methylation of RNAs, a modification that plays a role in the efficiency of mRNA splicing and RNA processing. Acts as a key regulator of m6A methylation by promoting m6A methylation of mRNAs in the 3'-UTR near the stop codon: recruits the catalytic core components METTL3 and METTL14, thereby guiding m6A methylation at specific sites. Required for mRNA polyadenylation via its role in selective m6A methylation: m6A methylation of mRNAs in the 3'-UTR near the stop codon correlating with alternative polyadenylation (APA). The protein is Protein virilizer homolog of Homo sapiens (Human).